The chain runs to 451 residues: UDP-N-acetylmuramate--L-alanine ligase (451 aa).

110 to 116 (GTHGKTT) contributes to the ATP binding site.

It belongs to the MurCDEF family.

Its subcellular location is the cytoplasm. It carries out the reaction UDP-N-acetyl-alpha-D-muramate + L-alanine + ATP = UDP-N-acetyl-alpha-D-muramoyl-L-alanine + ADP + phosphate + H(+). The protein operates within cell wall biogenesis; peptidoglycan biosynthesis. Cell wall formation. The protein is UDP-N-acetylmuramate--L-alanine ligase of Francisella tularensis subsp. mediasiatica (strain FSC147).